A 478-amino-acid polypeptide reads, in one-letter code: 3-isopropylmalate dehydratase large subunit (478 aa).

3 residues coordinate [4Fe-4S] cluster: Cys-359, Cys-417, and Cys-420.

The protein belongs to the aconitase/IPM isomerase family. LeuC type 1 subfamily. In terms of assembly, heterodimer of LeuC and LeuD. It depends on [4Fe-4S] cluster as a cofactor.

The enzyme catalyses (2R,3S)-3-isopropylmalate = (2S)-2-isopropylmalate. It participates in amino-acid biosynthesis; L-leucine biosynthesis; L-leucine from 3-methyl-2-oxobutanoate: step 2/4. In terms of biological role, catalyzes the isomerization between 2-isopropylmalate and 3-isopropylmalate, via the formation of 2-isopropylmaleate. The protein is 3-isopropylmalate dehydratase large subunit of Anaeromyxobacter sp. (strain Fw109-5).